A 489-amino-acid chain; its full sequence is UDP-N-acetylmuramoyl-L-alanyl-D-glutamate--2,6-diaminopimelate ligase (489 aa).

Serine 30 lines the UDP-N-acetyl-alpha-D-muramoyl-L-alanyl-D-glutamate pocket. 108 to 114 provides a ligand contact to ATP; it reads GTNGKTT. UDP-N-acetyl-alpha-D-muramoyl-L-alanyl-D-glutamate contacts are provided by residues asparagine 149, 150-151, serine 177, glutamine 183, and arginine 185; that span reads TT. Lysine 217 carries the post-translational modification N6-carboxylysine. Residues arginine 383, 407 to 410, glycine 459, and glutamate 463 each bind meso-2,6-diaminopimelate; that span reads DNPR. Positions 407-410 match the Meso-diaminopimelate recognition motif motif; that stretch reads DNPR.

The protein belongs to the MurCDEF family. MurE subfamily. Requires Mg(2+) as cofactor. In terms of processing, carboxylation is probably crucial for Mg(2+) binding and, consequently, for the gamma-phosphate positioning of ATP.

Its subcellular location is the cytoplasm. The catalysed reaction is UDP-N-acetyl-alpha-D-muramoyl-L-alanyl-D-glutamate + meso-2,6-diaminopimelate + ATP = UDP-N-acetyl-alpha-D-muramoyl-L-alanyl-gamma-D-glutamyl-meso-2,6-diaminopimelate + ADP + phosphate + H(+). It participates in cell wall biogenesis; peptidoglycan biosynthesis. Its function is as follows. Catalyzes the addition of meso-diaminopimelic acid to the nucleotide precursor UDP-N-acetylmuramoyl-L-alanyl-D-glutamate (UMAG) in the biosynthesis of bacterial cell-wall peptidoglycan. This is UDP-N-acetylmuramoyl-L-alanyl-D-glutamate--2,6-diaminopimelate ligase from Geobacillus kaustophilus (strain HTA426).